The chain runs to 136 residues: Small ribosomal subunit protein uS8c (136 aa).

The protein belongs to the universal ribosomal protein uS8 family. Part of the 30S ribosomal subunit.

The protein resides in the plastid. The protein localises to the chloroplast. One of the primary rRNA binding proteins, it binds directly to 16S rRNA central domain where it helps coordinate assembly of the platform of the 30S subunit. The protein is Small ribosomal subunit protein uS8c (rps8) of Saccharum hybrid (Sugarcane).